We begin with the raw amino-acid sequence, 90 residues long: Small ribosomal subunit protein bS16 (90 aa).

It belongs to the bacterial ribosomal protein bS16 family.

The protein is Small ribosomal subunit protein bS16 of Lactobacillus delbrueckii subsp. bulgaricus (strain ATCC 11842 / DSM 20081 / BCRC 10696 / JCM 1002 / NBRC 13953 / NCIMB 11778 / NCTC 12712 / WDCM 00102 / Lb 14).